The chain runs to 166 residues: Protein-export protein SecB (166 aa).

It belongs to the SecB family. In terms of assembly, homotetramer, a dimer of dimers. One homotetramer interacts with 1 SecA dimer.

It is found in the cytoplasm. Its function is as follows. One of the proteins required for the normal export of preproteins out of the cell cytoplasm. It is a molecular chaperone that binds to a subset of precursor proteins, maintaining them in a translocation-competent state. It also specifically binds to its receptor SecA. The chain is Protein-export protein SecB from Rhizorhabdus wittichii (strain DSM 6014 / CCUG 31198 / JCM 15750 / NBRC 105917 / EY 4224 / RW1) (Sphingomonas wittichii).